We begin with the raw amino-acid sequence, 365 residues long: Phospho-N-acetylmuramoyl-pentapeptide-transferase (365 aa).

10 consecutive transmembrane segments (helical) span residues 22–42 (YISVRIIMISITSLLITLALG), 74–94 (TMGGVLILSSVIISCLLWGNL), 95–115 (TSIYLWILILVVIFFGAIGFF), 134–154 (KFALQSIFSIVLAIVLFYLLS), 168–188 (SLYIPMGIVIFVVLAFFIING), 201–221 (GLAIVPVVLVAAGLGIYAYIE), 240–260 (LAEVAVFCAAVCGSGLAFLWF), 267–287 (VFMGDVGSLTLGAVLGVIAVM), 292–312 (LIFFIMGLLFVVEALSVMLQV), and 342–362 (KVVIRFWIISLILFLIGFAAI).

This sequence belongs to the glycosyltransferase 4 family. MraY subfamily. Mg(2+) is required as a cofactor.

It is found in the cell inner membrane. The enzyme catalyses UDP-N-acetyl-alpha-D-muramoyl-L-alanyl-gamma-D-glutamyl-meso-2,6-diaminopimeloyl-D-alanyl-D-alanine + di-trans,octa-cis-undecaprenyl phosphate = di-trans,octa-cis-undecaprenyl diphospho-N-acetyl-alpha-D-muramoyl-L-alanyl-D-glutamyl-meso-2,6-diaminopimeloyl-D-alanyl-D-alanine + UMP. It participates in cell wall biogenesis; peptidoglycan biosynthesis. In terms of biological role, catalyzes the initial step of the lipid cycle reactions in the biosynthesis of the cell wall peptidoglycan: transfers peptidoglycan precursor phospho-MurNAc-pentapeptide from UDP-MurNAc-pentapeptide onto the lipid carrier undecaprenyl phosphate, yielding undecaprenyl-pyrophosphoryl-MurNAc-pentapeptide, known as lipid I. The polypeptide is Phospho-N-acetylmuramoyl-pentapeptide-transferase (Francisella tularensis subsp. holarctica (strain OSU18)).